A 261-amino-acid polypeptide reads, in one-letter code: EKC/KEOPS complex subunit BUD32 (261 aa).

A Protein kinase domain is found at D16 to G261. Residues I22–V30 and K43 each bind ATP. D161 functions as the Proton acceptor in the catalytic mechanism. A phosphoserine; by autocatalysis mark is found at S187 and S189.

The protein belongs to the protein kinase superfamily. BUD32 family. As to quaternary structure, component of the EKC/KEOPS complex composed of at least BUD32, CGI121, GON7, KAE1 and PCC1; the whole complex dimerizes.

Its subcellular location is the cytoplasm. The protein resides in the nucleus. The protein localises to the chromosome. It is found in the telomere. The enzyme catalyses L-seryl-[protein] + ATP = O-phospho-L-seryl-[protein] + ADP + H(+). It carries out the reaction L-threonyl-[protein] + ATP = O-phospho-L-threonyl-[protein] + ADP + H(+). In terms of biological role, component of the EKC/KEOPS complex that is required for the formation of a threonylcarbamoyl group on adenosine at position 37 (t(6)A37) in tRNAs that read codons beginning with adenine. The complex is probably involved in the transfer of the threonylcarbamoyl moiety of threonylcarbamoyl-AMP (TC-AMP) to the N6 group of A37. BUD32 has ATPase activity in the context of the EKC/KEOPS complex and likely plays a supporting role to the catalytic subunit KAE1. The EKC/KEOPS complex also promotes both telomere uncapping and telomere elongation. The complex is required for efficient recruitment of transcriptional coactivators. Important for bud site selection. The sequence is that of EKC/KEOPS complex subunit BUD32 (BUD32) from Saccharomyces cerevisiae (strain ATCC 204508 / S288c) (Baker's yeast).